The primary structure comprises 614 residues: FAD-dependent monooxygenase terD (614 aa).

An N-terminal signal peptide occupies residues 1–23 (MSSKFDVVICGSGTAGLAAATWL). FAD is bound by residues 6 to 35 (DVVICGSGTAGLAAATWLAQYGVDCKILES), glutamine 44, valine 137, and 239 to 241 (RVY). Asparagine 260 carries N-linked (GlcNAc...) asparagine glycosylation. Residues tyrosine 282 and aspartate 303 each coordinate FAD. Asparagine 317 carries an N-linked (GlcNAc...) asparagine glycan. Position 319 (serine 319) interacts with FAD. Asparagine 602 carries N-linked (GlcNAc...) asparagine glycosylation.

This sequence belongs to the PheA/TfdB FAD monooxygenase family. FAD is required as a cofactor.

The protein operates within secondary metabolite biosynthesis. In terms of biological role, FAD-dependent monooxygenase; part of the gene cluster that mediates the biosynthesis of terrein, a fungal metabolite with ecological, antimicrobial, antiproliferative, and antioxidative activities. The first step in the pathway is performed by the polyketide synthase terA that produces 4-hydroxy-6-methylpyranon (4-HMP), orsellinic acid (OA), and 2,3-dehydro-6-hydroxymellein (2,3-dehydro-6-HM) by condensing acetyl-CoA with two, three, or four malonyl-CoA units, respectively. 4-HMP and OA are not pathway intermediates, but are rather shunt or side products. 2,3-dehydro-6-HM is further converted to 6-hydroxymellein (6-HM) by the 6-hydroxymellein synthase terB. The monooxygenases terC and terD, the multicopper oxidase terE and the Kelch-like protein terF are then involved in the transformation of 6-HM to terrein. Even if they are co-regulated with the other terrein cluster genes, terH and terI seem to be dispensable for terrein production; whereas one or both of the 2 transporters terG and terJ are probably required for efficient secretion of metabolites. The sequence is that of FAD-dependent monooxygenase terD from Aspergillus terreus (strain NIH 2624 / FGSC A1156).